A 411-amino-acid chain; its full sequence is Dihydrolipoyllysine-residue succinyltransferase component of 2-oxoglutarate dehydrogenase complex (411 aa).

One can recognise a Lipoyl-binding domain in the interval 2–77 (TTEIRVPTLG…EVNALLGAVE (76 aa)). Lysine 43 is subject to N6-lipoyllysine. Over residues 82-100 (SVAKSPSSSETSVSAAPSE) the composition is skewed to low complexity. Residues 82-115 (SVAKSPSSSETSVSAAPSELEQSSSSNTMPPAPS) form a disordered region. Polar residues predominate over residues 101–110 (LEQSSSSNTM). Positions 111–148 (PPAPSAAKLMAENNIAKSDILGSGKRGQILKEDVLNVL) constitute a Peripheral subunit-binding (PSBD) domain. Catalysis depends on residues histidine 382 and aspartate 386.

It belongs to the 2-oxoacid dehydrogenase family. In terms of assembly, forms a 24-polypeptide structural core with octahedral symmetry. Part of the 2-oxoglutarate dehydrogenase (OGDH) complex composed of E1 (2-oxoglutarate dehydrogenase), E2 (dihydrolipoamide succinyltransferase) and E3 (dihydrolipoamide dehydrogenase); the complex contains multiple copies of the three enzymatic components (E1, E2 and E3). (R)-lipoate serves as cofactor.

The catalysed reaction is N(6)-[(R)-dihydrolipoyl]-L-lysyl-[protein] + succinyl-CoA = N(6)-[(R)-S(8)-succinyldihydrolipoyl]-L-lysyl-[protein] + CoA. It functions in the pathway amino-acid degradation; L-lysine degradation via saccharopine pathway; glutaryl-CoA from L-lysine: step 6/6. E2 component of the 2-oxoglutarate dehydrogenase (OGDH) complex which catalyzes the second step in the conversion of 2-oxoglutarate to succinyl-CoA and CO(2). The chain is Dihydrolipoyllysine-residue succinyltransferase component of 2-oxoglutarate dehydrogenase complex (sucB) from Bartonella vinsonii subsp. berkhoffii.